Reading from the N-terminus, the 464-residue chain is ATP synthase subunit beta (464 aa).

Residue 153 to 160 (GGAGVGKT) coordinates ATP.

This sequence belongs to the ATPase alpha/beta chains family. F-type ATPases have 2 components, CF(1) - the catalytic core - and CF(0) - the membrane proton channel. CF(1) has five subunits: alpha(3), beta(3), gamma(1), delta(1), epsilon(1). CF(0) has three main subunits: a(1), b(2) and c(9-12). The alpha and beta chains form an alternating ring which encloses part of the gamma chain. CF(1) is attached to CF(0) by a central stalk formed by the gamma and epsilon chains, while a peripheral stalk is formed by the delta and b chains.

It is found in the cell inner membrane. The enzyme catalyses ATP + H2O + 4 H(+)(in) = ADP + phosphate + 5 H(+)(out). Its function is as follows. Produces ATP from ADP in the presence of a proton gradient across the membrane. The catalytic sites are hosted primarily by the beta subunits. In Burkholderia ambifaria (strain ATCC BAA-244 / DSM 16087 / CCUG 44356 / LMG 19182 / AMMD) (Burkholderia cepacia (strain AMMD)), this protein is ATP synthase subunit beta.